The chain runs to 440 residues: T-box transcription factor T homolog 2 (440 aa).

A DNA-binding region (T-box) is located at residues 44-215; that stretch reads LWEKFKSLTN…HNPFAKAFLD (172 aa). Disordered stretches follow at residues 282-303 and 393-440; these read APYP…DTAA and TTAS…MPSM. Positions 409-440 are enriched in polar residues; the sequence is STDSGYGHSTTPPAPQTRITSNNWSPMTMPSM.

As to expression, mesoderm and notochord.

It is found in the nucleus. Functionally, involved in the transcriptional regulation of genes required for mesoderm formation and differentiation. The protein is T-box transcription factor T homolog 2 of Branchiostoma floridae (Florida lancelet).